The chain runs to 506 residues: ATP synthase subunit alpha (506 aa).

171 to 178 (GDRQTGKT) is a binding site for ATP.

The protein belongs to the ATPase alpha/beta chains family. In terms of assembly, F-type ATPases have 2 components, CF(1) - the catalytic core - and CF(0) - the membrane proton channel. CF(1) has five subunits: alpha(3), beta(3), gamma(1), delta(1), epsilon(1). CF(0) has four main subunits: a, b, b' and c.

The protein localises to the cellular thylakoid membrane. The catalysed reaction is ATP + H2O + 4 H(+)(in) = ADP + phosphate + 5 H(+)(out). In terms of biological role, produces ATP from ADP in the presence of a proton gradient across the membrane. The alpha chain is a regulatory subunit. The protein is ATP synthase subunit alpha of Nostoc punctiforme (strain ATCC 29133 / PCC 73102).